We begin with the raw amino-acid sequence, 210 residues long: Small ribosomal subunit protein uS3 (210 aa).

Positions 38-106 constitute a KH type-2 domain; it reads IRAFLKKRLY…EIFINIIEVR (69 aa).

This sequence belongs to the universal ribosomal protein uS3 family. In terms of assembly, part of the 30S ribosomal subunit. Forms a tight complex with proteins S10 and S14.

Its function is as follows. Binds the lower part of the 30S subunit head. Binds mRNA in the 70S ribosome, positioning it for translation. The polypeptide is Small ribosomal subunit protein uS3 (Pelobacter propionicus (strain DSM 2379 / NBRC 103807 / OttBd1)).